A 116-amino-acid polypeptide reads, in one-letter code: Large ribosomal subunit protein bL20c (116 aa).

Belongs to the bacterial ribosomal protein bL20 family.

The protein localises to the plastid. It localises to the chloroplast. Binds directly to 23S ribosomal RNA and is necessary for the in vitro assembly process of the 50S ribosomal subunit. It is not involved in the protein synthesizing functions of that subunit. This chain is Large ribosomal subunit protein bL20c, found in Cryptomeria japonica (Japanese cedar).